A 290-amino-acid polypeptide reads, in one-letter code: 4-hydroxy-tetrahydrodipicolinate synthase (290 aa).

A pyruvate-binding site is contributed by threonine 42. Tyrosine 129 functions as the Proton donor/acceptor in the catalytic mechanism. Catalysis depends on lysine 157, which acts as the Schiff-base intermediate with substrate. A pyruvate-binding site is contributed by isoleucine 198.

It belongs to the DapA family. In terms of assembly, homotetramer; dimer of dimers.

It is found in the cytoplasm. The catalysed reaction is L-aspartate 4-semialdehyde + pyruvate = (2S,4S)-4-hydroxy-2,3,4,5-tetrahydrodipicolinate + H2O + H(+). It participates in amino-acid biosynthesis; L-lysine biosynthesis via DAP pathway; (S)-tetrahydrodipicolinate from L-aspartate: step 3/4. In terms of biological role, catalyzes the condensation of (S)-aspartate-beta-semialdehyde [(S)-ASA] and pyruvate to 4-hydroxy-tetrahydrodipicolinate (HTPA). The sequence is that of 4-hydroxy-tetrahydrodipicolinate synthase from Chlamydia felis (strain Fe/C-56) (Chlamydophila felis).